Reading from the N-terminus, the 1082-residue chain is M cell-type agglutination protein mam3 (1082 aa).

The first 18 residues, 1–18 (MSIALAFFILVLLGFSWA), serve as a signal peptide directing secretion. N-linked (GlcNAc...) asparagine glycans are attached at residues N28, N56, and N82. A disordered region spans residues 353-374 (TSSSSTDQLTSASPISSSVISP). N451, N475, N495, N520, N548, N588, N613, and N638 each carry an N-linked (GlcNAc...) asparagine glycan. Repeat copies occupy residues 646–681 (QTTTEYTTSGSVGFTTTLATQSGSVPGTVLVDVPTP), 682–717 (SWITETVTSGSVGFTTTIATPIGTTAGTVLVDIPTP), 718–753 (SWVTETVTSGSIGFTTTIATPIGSTAGTVLVDVPTP), 754–789 (SWVTETVTSGSVGFTTTIATPIGSTAGTVLVDIPTP), 790–825 (SWVTETVTSGSVGFTTTIATPVGTTAGTVLVDIPTP), 826–861 (SWVTETVTSGSVGFTTTIATPVGTTAGTVVVDVPTP), 862–897 (SWVTETVTSGSVGFTTTIATPIGSTAGTVLVDIPTP), 898–933 (SWVTETVTSGSVGFTTTIATPVGTTAGTVLVDIPTP), 934–969 (SWVTETVTSGSVGFTTTIATPIGTTAGTVLVDIPTP), 970–1005 (SWVTETVTSGSVGFTTTIATPVGTTAGTVLVDIPTP), and 1006–1041 (SWVTETVTSGSVGFTTTIATPIGTTAGTVLVDIPQQ). An 11 X 36 AA approximate tandem repeats region spans residues 720–1043 (VTETVTSGSI…VLVDIPQQHA (324 aa)).

The protein belongs to the mam3/map4 family.

Its subcellular location is the cell surface. In terms of biological role, m cell-type specific protein involved in agglutination during conjugation. The chain is M cell-type agglutination protein mam3 from Schizosaccharomyces pombe (strain 972 / ATCC 24843) (Fission yeast).